The primary structure comprises 309 residues: ATP synthase gamma chain (309 aa).

It belongs to the ATPase gamma chain family. In terms of assembly, F-type ATPases have 2 components, CF(1) - the catalytic core - and CF(0) - the membrane proton channel. CF(1) has five subunits: alpha(3), beta(3), gamma(1), delta(1), epsilon(1). CF(0) has three main subunits: a, b and c.

The protein localises to the cell membrane. Its function is as follows. Produces ATP from ADP in the presence of a proton gradient across the membrane. The gamma chain is believed to be important in regulating ATPase activity and the flow of protons through the CF(0) complex. The polypeptide is ATP synthase gamma chain (Mycolicibacterium gilvum (strain PYR-GCK) (Mycobacterium gilvum (strain PYR-GCK))).